The chain runs to 324 residues: Olfactory receptor 8U3 (324 aa).

Residues 1–25 (MAEVNIIYVTVFILKGITNRPELQA) lie on the Extracellular side of the membrane. The helical transmembrane segment at 26 to 46 (PCFGVFLVIYLVTVLGNLGLI) threads the bilayer. Residues 47-54 (TLIKIDTR) lie on the Cytoplasmic side of the membrane. Residues 55 to 75 (LHTPMYYFLSHLAFVDLCYSS) form a helical membrane-spanning segment. The Extracellular portion of the chain corresponds to 76-99 (AITPKMMVNFVVERNTIPFHACAT). A disulfide bridge links cysteine 97 with cysteine 189. Residues 100 to 120 (QLGCFLTFMITECFLLASMAY) form a helical membrane-spanning segment. At 121 to 139 (DCYVAICSPLHYSTLMSRR) the chain is on the cytoplasmic side. The chain crosses the membrane as a helical span at residues 140–160 (VCIQLVAVPYIYSFLVALFHT). Residues 161–196 (VITFRLTYCGPNLINHFYCDDLPFLALSCSDTHMKE) lie on the Extracellular side of the membrane. A helical transmembrane segment spans residues 197–217 (ILIFAFAGFDMISSSSIVLTS). The Cytoplasmic portion of the chain corresponds to 218–237 (YIFIIAAILRIRSTQGQHKA). Residues 238-258 (ISTCGSHMVTVTIFYGTLIFM) traverse the membrane as a helical segment. Residues 259-271 (YLQPKSNHSLDTD) lie on the Extracellular side of the membrane. Asparagine 265 is a glycosylation site (N-linked (GlcNAc...) asparagine). Residues 272–292 (KMASVFYTVVIPMLNPLIYSL) form a helical membrane-spanning segment. The Cytoplasmic segment spans residues 293-324 (RNKEVKDASKKALDKGCENLQILTFLKIRKLY).

The protein belongs to the G-protein coupled receptor 1 family.

The protein localises to the cell membrane. Its function is as follows. Odorant receptor. This is Olfactory receptor 8U3 from Homo sapiens (Human).